We begin with the raw amino-acid sequence, 269 residues long: tRNA-cytidine(32) 2-sulfurtransferase (269 aa).

Residues S53–S58 carry the PP-loop motif motif. [4Fe-4S] cluster-binding residues include C128, C131, and C218.

Belongs to the TtcA family. In terms of assembly, homodimer. The cofactor is Mg(2+). [4Fe-4S] cluster is required as a cofactor.

Its subcellular location is the cytoplasm. It carries out the reaction cytidine(32) in tRNA + S-sulfanyl-L-cysteinyl-[cysteine desulfurase] + AH2 + ATP = 2-thiocytidine(32) in tRNA + L-cysteinyl-[cysteine desulfurase] + A + AMP + diphosphate + H(+). It participates in tRNA modification. Catalyzes the ATP-dependent 2-thiolation of cytidine in position 32 of tRNA, to form 2-thiocytidine (s(2)C32). The sulfur atoms are provided by the cysteine/cysteine desulfurase (IscS) system. The sequence is that of tRNA-cytidine(32) 2-sulfurtransferase from Pelobacter propionicus (strain DSM 2379 / NBRC 103807 / OttBd1).